A 301-amino-acid polypeptide reads, in one-letter code: MKIAVLSRNPRLYSTRRLVEAGERRGHQMVVIDTLRAYMNIASHKPQIHYRGRPLEGFDAVIPRIGASVTFYGCAVLRQFEMMGVFPLNESVAISRSRDKLRSLQLLSRKGIGLPVTGFAHSPDDIPDLIAMVGGAPLVIKLLEGTQGIGVVLCETQKAAESVIEAFMGMEQNIMVQEYIQEAGGADIRCFVVGEKVIAAMKRQAKPGEFRSNLHRGGTASLIKITPEERMTAIRAAKVMGLNVAGVDILRSNHGPLVMEVNSSPGLEGIETTTGKDVAGIIIEYLEKNAEHGLTRTRGKG.

The ATP-grasp domain maps to 104–287 (LQLLSRKGIG…VAGIIIEYLE (184 aa)). ATP is bound by residues Lys141, 178–179 (EY), Asp187, and 211–213 (RSN). Residues Asp248, Glu260, and Asn262 each contribute to the Mg(2+) site. Residues Asp248, Glu260, and Asn262 each coordinate Mn(2+).

The protein belongs to the RimK family. The cofactor is Mg(2+). Mn(2+) is required as a cofactor.

The sequence is that of Probable alpha-L-glutamate ligase from Azotobacter vinelandii (strain DJ / ATCC BAA-1303).